The following is a 388-amino-acid chain: Chorismate synthase (388 aa).

The NADP(+) site is built by arginine 39 and arginine 45. FMN-binding positions include 130-132 (RSS), 251-252 (NA), glycine 296, 311-315 (KPIPT), and arginine 337.

The protein belongs to the chorismate synthase family. Homotetramer. The cofactor is FMNH2.

It catalyses the reaction 5-O-(1-carboxyvinyl)-3-phosphoshikimate = chorismate + phosphate. The protein operates within metabolic intermediate biosynthesis; chorismate biosynthesis; chorismate from D-erythrose 4-phosphate and phosphoenolpyruvate: step 7/7. Its function is as follows. Catalyzes the anti-1,4-elimination of the C-3 phosphate and the C-6 proR hydrogen from 5-enolpyruvylshikimate-3-phosphate (EPSP) to yield chorismate, which is the branch point compound that serves as the starting substrate for the three terminal pathways of aromatic amino acid biosynthesis. This reaction introduces a second double bond into the aromatic ring system. The chain is Chorismate synthase from Geobacillus sp. (strain WCH70).